The primary structure comprises 328 residues: Malate dehydrogenase (328 aa).

Residue 13-19 coordinates NAD(+); the sequence is GAAGQIS. Substrate is bound by residues arginine 94 and arginine 100. NAD(+) is bound by residues asparagine 107, glutamine 114, and 131–133; that span reads VGN. Substrate is bound by residues asparagine 133 and arginine 164. Histidine 189 functions as the Proton acceptor in the catalytic mechanism.

Belongs to the LDH/MDH superfamily. MDH type 2 family.

It catalyses the reaction (S)-malate + NAD(+) = oxaloacetate + NADH + H(+). Functionally, catalyzes the reversible oxidation of malate to oxaloacetate. The chain is Malate dehydrogenase from Alcanivorax borkumensis (strain ATCC 700651 / DSM 11573 / NCIMB 13689 / SK2).